Reading from the N-terminus, the 242-residue chain is Putative prolyl 4-hydroxylase (242 aa).

The Fe2OG dioxygenase domain maps to 128–238; it reads NAEDLQVVRY…KWIANLWFRE (111 aa).

It belongs to the P4HA family. Fe cation serves as cofactor. Requires L-ascorbate as cofactor.

The protein resides in the virion. It catalyses the reaction L-prolyl-[collagen] + 2-oxoglutarate + O2 = trans-4-hydroxy-L-prolyl-[collagen] + succinate + CO2. In terms of biological role, may catalyze the post-translational formation of 4-hydroxyproline in -Xaa-Pro-Gly- sequences in the 6 collagen-like proteins of Mimivirus. This chain is Putative prolyl 4-hydroxylase, found in Acanthamoeba polyphaga mimivirus (APMV).